The chain runs to 329 residues: MTEMRVKADLGDCRFYKKKFPEVDDLIMVKVNRIEDMGAYVSILEYNDMEGMILMSELSKRRFRSVNKLIRVGRHEVVLVLRVDSQKGYIDLSKRRVSPKDIIKCEEKFSKSKKVHQTVRHVAKEHGITVEELNEKAIWPLYERYGHALDALKEATMNPENVFKGLDISEEIKNSLLKDIKLRLTPQALKLRGRIDVWCFGYEGIDAVKEALKKGKEISNDKVSINIKLIAPPQYVIVTSCHDKDLGMAKIQEAMKVISDKIKEYKGGDFKQQGEILVIGGDEEKRLEELLDKHDGISSDDDDYNTSDEDDENSSEEDENTSEDEEEED.

One can recognise an S1 motif domain in the interval 24–95 (DDLIMVKVNR…QKGYIDLSKR (72 aa)). Phosphoserine; by eIK1, eIK2 and PK4 is present on S59. The segment at 291 to 329 (LDKHDGISSDDDDYNTSDEDDENSSEEDENTSEDEEEED) is disordered. Positions 298–329 (SSDDDDYNTSDEDDENSSEEDENTSEDEEEED) are enriched in acidic residues.

This sequence belongs to the eIF-2-alpha family. Post-translationally, phosphorylated at Ser-59 by eIK1 in response to amino acid starvation. Phosphorylates at Ser-59 in schizonts and gametocytes but not in rings and young trophozoites. Phosphorylates at Ser-59 by eIK2 in salivary gland sporozoites but not in midgut and hemocoel sporozoites. Dephosphorylated at Ser-59 by UIS2. Phosphorylation of eIF2alpha subunit of the pre-initiation complex eIF2 inhibits recycling of inactive eIF2-GDP to active eIF2-GTP by limiting the activity of the guanine nucleotide exchange factor eIF2B and thus, inhibits protein translation.

The protein resides in the cytoplasm. It is found in the stress granule. Its function is as follows. Functions in the early steps of protein synthesis by forming a ternary complex with GTP and initiator tRNA. May regulate protein translation in response to amino acid starvation. May regulate protein at various stages of parasite development. This chain is Eukaryotic translation initiation factor 2 subunit 1, found in Plasmodium falciparum (isolate 3D7).